A 373-amino-acid polypeptide reads, in one-letter code: Chorismate synthase (373 aa).

R46 provides a ligand contact to NADP(+). FMN is bound by residues 123-125 (RSS), 251-252 (NA), G295, 310-314 (KPTPS), and R337.

This sequence belongs to the chorismate synthase family. FMNH2 is required as a cofactor.

The enzyme catalyses 5-O-(1-carboxyvinyl)-3-phosphoshikimate = chorismate + phosphate. Its pathway is metabolic intermediate biosynthesis; chorismate biosynthesis; chorismate from D-erythrose 4-phosphate and phosphoenolpyruvate: step 7/7. In terms of biological role, catalyzes the anti-1,4-elimination of the C-3 phosphate and the C-6 proR hydrogen from 5-enolpyruvylshikimate-3-phosphate (EPSP) to yield chorismate, which is the branch point compound that serves as the starting substrate for the three terminal pathways of aromatic amino acid biosynthesis. This reaction introduces a second double bond into the aromatic ring system. The chain is Chorismate synthase from Methanococcus maripaludis (strain C7 / ATCC BAA-1331).